The chain runs to 868 residues: Leucine-rich repeat receptor-like serine/threonine-protein kinase At2g14510 (868 aa).

The first 23 residues, 1 to 23, serve as a signal peptide directing secretion; it reads METRNKFMLLACATFSIMSLVKS. At 24-510 the chain is on the extracellular side; that stretch reads QNQQGFISLD…KHQPKSWLVA (487 aa). N-linked (GlcNAc...) asparagine glycans are attached at residues Asn-48, Asn-68, Asn-231, Asn-235, Asn-258, Asn-291, Asn-433, and Asn-446. LRR repeat units lie at residues 412-435, 436-458, and 460-482; these read RIIS…QNLT, MLRE…LATI, and PLLV…LQDR. The N-linked (GlcNAc...) asparagine glycan is linked to Asn-495. Residues 511 to 531 form a helical membrane-spanning segment; it reads IVASISCVAVTIIVLVLIFIF. Topologically, residues 532–868 are cytoplasmic; it reads RRRKSSTRKV…TFISDIPSAR (337 aa). Residues 563–832 enclose the Protein kinase domain; that stretch reads NNFEVVLGKG…NMTRVAHELN (270 aa). Residues 569 to 577 and Lys-590 each bind ATP; that span reads LGKGGFGVV. Tyr-635 is modified (phosphotyrosine). Asp-687 functions as the Proton acceptor in the catalytic mechanism. Ser-721 carries the phosphoserine modification. Phosphothreonine occurs at positions 722 and 727. At Tyr-735 the chain carries Phosphotyrosine.

This sequence belongs to the protein kinase superfamily. Ser/Thr protein kinase family.

The protein localises to the cell membrane. The catalysed reaction is L-seryl-[protein] + ATP = O-phospho-L-seryl-[protein] + ADP + H(+). It catalyses the reaction L-threonyl-[protein] + ATP = O-phospho-L-threonyl-[protein] + ADP + H(+). This is Leucine-rich repeat receptor-like serine/threonine-protein kinase At2g14510 from Arabidopsis thaliana (Mouse-ear cress).